Here is a 234-residue protein sequence, read N- to C-terminus: Orotidine 5'-phosphate decarboxylase (234 aa).

Substrate-binding positions include Asp10, Lys31, 58–67, Thr121, Arg183, Gln192, Gly212, and Arg213; that span reads DLKLHDIPNT. Lys60 functions as the Proton donor in the catalytic mechanism.

Belongs to the OMP decarboxylase family. Type 1 subfamily. As to quaternary structure, homodimer.

The catalysed reaction is orotidine 5'-phosphate + H(+) = UMP + CO2. It functions in the pathway pyrimidine metabolism; UMP biosynthesis via de novo pathway; UMP from orotate: step 2/2. Its function is as follows. Catalyzes the decarboxylation of orotidine 5'-monophosphate (OMP) to uridine 5'-monophosphate (UMP). The sequence is that of Orotidine 5'-phosphate decarboxylase from Lysinibacillus sphaericus (strain C3-41).